Reading from the N-terminus, the 433-residue chain is Schlafen-like protein 2 (433 aa).

The B30.2/SPRY domain occupies 1–168; the sequence is MADTSPRESK…LSVNFGSQPF (168 aa). The segment at 199–400 is SLFN-like fold; sequence EHVVVKLPFA…RRMASNKCVY (202 aa). Residues Glu211 and Glu216 contribute to the active site.

Belongs to the Schlafen family. Component of the trimeric PUCH (precursor of 21U RNA 5'-end cleavage holoenzyme) complex; consisting of tofu-1, tofu-2 and either slfl-3 or slfl-4. Within the complex, interacts (via N-terminus) with tofu-1 (via N-terminus); the interaction stabilizes tofu-2 and may form a functional nuclease. Within the complex, interacts (via N-terminus) with slfl-3 (via N-terminus); the presence of tofu-1 is required for this interaction. Mg(2+) is required as a cofactor. As to expression, expressed in the germline.

The protein localises to the cytoplasm. The protein resides in the mitochondrion. With respect to regulation, inhibited by ethylenediaminetetraacetic acid (EDTA). In terms of biological role, component of the trimeric PUCH (precursor of 21U RNA 5'-end cleavage holoenzyme) complex, that acts as an endoribonuclease processing the 5'-end of precursor Piwi-interacting RNAs (piRNAs). The PUCH complex consists of tofu-1, tofu-2 and either slfl-3 or slfl-4, with tofu-2 exhibiting endoribonuclease activity. PUCH-mediated processing strictly requires a 7-methyl-G cap (m7 G-cap) and an uracil at position three (U3). PUCH also exhibits a strict bias for piRNA precursors with an A or G at position 1. Mature piRNA production is enhanced by the interaction of PUCH with the PETISCO complex, which is stabilizing piRNA precursors and allows their processing by PUCH. This is Schlafen-like protein 2 from Caenorhabditis elegans.